Consider the following 369-residue polypeptide: Serine/threonine-protein kinase srb10 (369 aa).

Residues 5-319 (YKIIGFISSG…AKQALEHVFF (315 aa)) enclose the Protein kinase domain. Residues 11 to 19 (ISSGTYGKV) and lysine 36 contribute to the ATP site. Aspartate 140 functions as the Proton acceptor in the catalytic mechanism.

The protein belongs to the protein kinase superfamily. CMGC Ser/Thr protein kinase family. CDC2/CDKX subfamily. Component of the Cdk8 module of the Mediator complex. The Cdk8 module is composed of srb8, srb9, srb10 and srb11. Interacts with med17 and med18.

The protein resides in the nucleus. The catalysed reaction is L-seryl-[protein] + ATP = O-phospho-L-seryl-[protein] + ADP + H(+). The enzyme catalyses L-threonyl-[protein] + ATP = O-phospho-L-threonyl-[protein] + ADP + H(+). It catalyses the reaction [DNA-directed RNA polymerase] + ATP = phospho-[DNA-directed RNA polymerase] + ADP + H(+). Functionally, catalytic component of the Cdk8 module/Srb8-11 module which is a regulatory module of the Mediator complex that regulates basal RNA polymerase II transcription. The Cdk8 module may sterically hinder the interaction between Mediator and RNA polymerase II leading to transcriptional repression of a subset of genes regulated by Mediator. This Schizosaccharomyces pombe (strain 972 / ATCC 24843) (Fission yeast) protein is Serine/threonine-protein kinase srb10 (srb10).